The following is a 177-amino-acid chain: Isopentenyl-diphosphate Delta-isomerase (177 aa).

Mn(2+) contacts are provided by H22 and H28. One can recognise a Nudix hydrolase domain in the interval 26–160; it reads LRHMAISVFV…PERFTPWLRI (135 aa). Residue C62 is part of the active site. H64 is a binding site for Mn(2+). Position 82 (E82) interacts with Mg(2+). Positions 108 and 110 each coordinate Mn(2+). E110 is an active-site residue.

Belongs to the IPP isomerase type 1 family. It depends on Mg(2+) as a cofactor. Requires Mn(2+) as cofactor.

The protein resides in the cytoplasm. The enzyme catalyses isopentenyl diphosphate = dimethylallyl diphosphate. It participates in isoprenoid biosynthesis; dimethylallyl diphosphate biosynthesis; dimethylallyl diphosphate from isopentenyl diphosphate: step 1/1. The protein operates within porphyrin-containing compound metabolism; chlorophyll biosynthesis. Functionally, catalyzes the 1,3-allylic rearrangement of the homoallylic substrate isopentenyl (IPP) to its highly electrophilic allylic isomer, dimethylallyl diphosphate (DMAPP). This Cereibacter sphaeroides (strain KD131 / KCTC 12085) (Rhodobacter sphaeroides) protein is Isopentenyl-diphosphate Delta-isomerase.